The sequence spans 49 residues: U6-myrmicitoxin-Mri1a (49 aa).

The first 27 residues, 1–27 (MNPKALCSFLLATFLLLTVTIMPSVHA), serve as a signal peptide directing secretion. The propeptide occupies 28 to 35 (NAEANADA).

Contains 1 disulfide bond. As to expression, expressed by the venom gland.

Its subcellular location is the secreted. The chain is U6-myrmicitoxin-Mri1a from Manica rubida (European giant red ant).